Reading from the N-terminus, the 567-residue chain is Malate synthase (567 aa).

Residue Arg177 is the Proton acceptor of the active site. Catalysis depends on Asp466, which acts as the Proton donor. Positions 565–567 (CKL) match the Microbody targeting signal motif.

The protein belongs to the malate synthase family.

The protein localises to the glyoxysome. It carries out the reaction glyoxylate + acetyl-CoA + H2O = (S)-malate + CoA + H(+). The protein operates within carbohydrate metabolism; glyoxylate cycle; (S)-malate from isocitrate: step 2/2. The polypeptide is Malate synthase (Oryza sativa subsp. japonica (Rice)).